We begin with the raw amino-acid sequence, 49 residues long: Light-harvesting protein B-875 beta chain (49 aa).

The Cytoplasmic segment spans residues 2 to 27 (ADKSDLGYTGLTDEQAQELHSVYMSG). A bacteriochlorophyll is bound by residues His-21 and His-39. The helical; Signal-anchor for type II membrane protein transmembrane segment at 28 to 45 (LWLFSAVAIVAHLAVYIW) threads the bilayer. The Periplasmic portion of the chain corresponds to 46–49 (RPWF).

It belongs to the antenna complex beta subunit family. As to quaternary structure, the core complex is formed by different alpha and beta chains, binding bacteriochlorophyll molecules, and arranged most probably in tetrameric structures disposed around the reaction center. The non-pigmented gamma chains may constitute additional components.

The protein resides in the cell inner membrane. Its function is as follows. Antenna complexes are light-harvesting systems, which transfer the excitation energy to the reaction centers. The polypeptide is Light-harvesting protein B-875 beta chain (pufB) (Cereibacter sphaeroides (strain ATCC 17023 / DSM 158 / JCM 6121 / CCUG 31486 / LMG 2827 / NBRC 12203 / NCIMB 8253 / ATH 2.4.1.) (Rhodobacter sphaeroides)).